A 240-amino-acid polypeptide reads, in one-letter code: UDP-2,3-diacylglucosamine hydrolase (240 aa).

Residues Asp-8, His-10, Asp-41, Asn-79, and His-114 each coordinate Mn(2+). Asn-79–Arg-80 lines the substrate pocket. Residues Asp-122, Ser-160, Asn-164, Lys-167, and His-195 each contribute to the substrate site. The Mn(2+) site is built by His-195 and His-197.

Belongs to the LpxH family. The cofactor is Mn(2+).

The protein resides in the cell inner membrane. It catalyses the reaction UDP-2-N,3-O-bis[(3R)-3-hydroxytetradecanoyl]-alpha-D-glucosamine + H2O = 2-N,3-O-bis[(3R)-3-hydroxytetradecanoyl]-alpha-D-glucosaminyl 1-phosphate + UMP + 2 H(+). It functions in the pathway glycolipid biosynthesis; lipid IV(A) biosynthesis; lipid IV(A) from (3R)-3-hydroxytetradecanoyl-[acyl-carrier-protein] and UDP-N-acetyl-alpha-D-glucosamine: step 4/6. Its function is as follows. Hydrolyzes the pyrophosphate bond of UDP-2,3-diacylglucosamine to yield 2,3-diacylglucosamine 1-phosphate (lipid X) and UMP by catalyzing the attack of water at the alpha-P atom. Involved in the biosynthesis of lipid A, a phosphorylated glycolipid that anchors the lipopolysaccharide to the outer membrane of the cell. This Proteus mirabilis (strain HI4320) protein is UDP-2,3-diacylglucosamine hydrolase.